A 244-amino-acid chain; its full sequence is Biosynthetic peptidoglycan transglycosylase (244 aa).

A helical transmembrane segment spans residues 23 to 43 (LVVIGAWLAGILLFSFLPVPF).

The protein belongs to the glycosyltransferase 51 family.

Its subcellular location is the cell inner membrane. It carries out the reaction [GlcNAc-(1-&gt;4)-Mur2Ac(oyl-L-Ala-gamma-D-Glu-L-Lys-D-Ala-D-Ala)](n)-di-trans,octa-cis-undecaprenyl diphosphate + beta-D-GlcNAc-(1-&gt;4)-Mur2Ac(oyl-L-Ala-gamma-D-Glu-L-Lys-D-Ala-D-Ala)-di-trans,octa-cis-undecaprenyl diphosphate = [GlcNAc-(1-&gt;4)-Mur2Ac(oyl-L-Ala-gamma-D-Glu-L-Lys-D-Ala-D-Ala)](n+1)-di-trans,octa-cis-undecaprenyl diphosphate + di-trans,octa-cis-undecaprenyl diphosphate + H(+). It functions in the pathway cell wall biogenesis; peptidoglycan biosynthesis. Its function is as follows. Peptidoglycan polymerase that catalyzes glycan chain elongation from lipid-linked precursors. This chain is Biosynthetic peptidoglycan transglycosylase, found in Pectobacterium carotovorum subsp. carotovorum (strain PC1).